Consider the following 1007-residue polypeptide: Protocadherin alpha-C2 (1007 aa).

The first 42 residues, 1–42, serve as a signal peptide directing secretion; the sequence is MEQAGTRPAATEHPRLRRPMPWLLLLPLLLLLLLLLPGPAAS. Cadherin domains lie at 43 to 148, 149 to 257, 258 to 365, 374 to 469, and 470 to 579; these read QLRY…SPRF, PRPN…SPAF, DQST…APEV, VPEN…PPSF, and LEDS…APHI. At 43-708 the chain is on the extracellular side; the sequence is QLRYSVPEEQ…RTYSEITLYL (666 aa). Asn-280 and Asn-436 each carry an N-linked (GlcNAc...) asparagine glycan. N-linked (GlcNAc...) asparagine glycosylation is found at Asn-586 and Asn-657. The Cadherin 6 domain maps to 594–691; it reads VPRTAPAGYL…DRVSKILPDT (98 aa). The helical transmembrane segment at 709-729 threads the bilayer; it reads IIALSTVSFIFLLTIIILSII. At 730-1007 the chain is on the cytoplasmic side; that stretch reads KCYRYTAYGT…GNSTTDNSDQ (278 aa). 4 PXXP repeats span residues 856-859, 889-892, 930-933, and 948-951; these read PRQP, PGGP, PGNP, and PGSP. A 4 X 4 AA repeats of P-X-X-P region spans residues 856–951; sequence PRQPNPDWRY…PDKFIIPGSP (96 aa). Positions 885–1007 are disordered; that stretch reads LRAGPGGPDQ…GNSTTDNSDQ (123 aa). Positions 966–980 are enriched in basic and acidic residues; that stretch reads DKSDFITFGKKEETK.

The protein resides in the cell membrane. Functionally, potential calcium-dependent cell-adhesion protein. May be involved in the establishment and maintenance of specific neuronal connections in the brain. The sequence is that of Protocadherin alpha-C2 (PCDHAC2) from Homo sapiens (Human).